Consider the following 552-residue polypeptide: Oxygen-dependent choline dehydrogenase (552 aa).

7 to 36 contributes to the FAD binding site; it reads DYIIIGAGSAGNVLAARLTEDKDTTVLLLE. The active-site Proton acceptor is His477.

It belongs to the GMC oxidoreductase family. It depends on FAD as a cofactor.

It carries out the reaction choline + A = betaine aldehyde + AH2. The catalysed reaction is betaine aldehyde + NAD(+) + H2O = glycine betaine + NADH + 2 H(+). It participates in amine and polyamine biosynthesis; betaine biosynthesis via choline pathway; betaine aldehyde from choline (cytochrome c reductase route): step 1/1. In terms of biological role, involved in the biosynthesis of the osmoprotectant glycine betaine. Catalyzes the oxidation of choline to betaine aldehyde and betaine aldehyde to glycine betaine at the same rate. The chain is Oxygen-dependent choline dehydrogenase from Acinetobacter baumannii (strain AB307-0294).